The following is a 251-amino-acid chain: Probable ATP-dependent transporter ycf16 (251 aa).

The 245-residue stretch at 6–250 folds into the ABC transporter domain; it reads LEIKDLYASV…EKHGYDWITQ (245 aa). 38–45 contacts ATP; the sequence is GPNGSGKS.

The protein belongs to the ABC transporter superfamily. Ycf16 family.

The protein resides in the plastid. The protein localises to the chloroplast. The polypeptide is Probable ATP-dependent transporter ycf16 (ycf16) (Pyropia yezoensis (Susabi-nori)).